Here is a 691-residue protein sequence, read N- to C-terminus: Amino-acid acetyltransferase, mitochondrial (691 aa).

Residues 1-27 (MSSTSLAWPRTAKSSLLQSADFSSTSK) show a composition bias toward polar residues. Disordered stretches follow at residues 1-29 (MSSTSLAWPRTAKSSLLQSADFSSTSKGY) and 65-95 (RLKAQHSPKPQVKEPEKESKDDAPQPLPSGV). The segment covering 75 to 87 (QVKEPEKESKDDA) has biased composition (basic and acidic residues). An N-acetyltransferase domain is found at 512 to 681 (NRPRMSLDDP…YEAVCRSIQP (170 aa)).

This sequence belongs to the acetyltransferase family.

Its subcellular location is the mitochondrion. The catalysed reaction is L-glutamate + acetyl-CoA = N-acetyl-L-glutamate + CoA + H(+). It participates in amino-acid biosynthesis; L-arginine biosynthesis; N(2)-acetyl-L-ornithine from L-glutamate: step 1/4. Functionally, N-acetylglutamate synthase involved in arginine biosynthesis. This is Amino-acid acetyltransferase, mitochondrial (arg2) from Aspergillus terreus (strain NIH 2624 / FGSC A1156).